Reading from the N-terminus, the 141-residue chain is Large ribosomal subunit protein uL11 (141 aa).

Belongs to the universal ribosomal protein uL11 family. Part of the ribosomal stalk of the 50S ribosomal subunit. Interacts with L10 and the large rRNA to form the base of the stalk. L10 forms an elongated spine to which L12 dimers bind in a sequential fashion forming a multimeric L10(L12)X complex. One or more lysine residues are methylated.

Its function is as follows. Forms part of the ribosomal stalk which helps the ribosome interact with GTP-bound translation factors. The chain is Large ribosomal subunit protein uL11 from Ruegeria pomeroyi (strain ATCC 700808 / DSM 15171 / DSS-3) (Silicibacter pomeroyi).